We begin with the raw amino-acid sequence, 502 residues long: Cytochrome P450 CYP94D109 (502 aa).

A helical membrane pass occupies residues 3-23; sequence SLSLIFISFITLIVFLVVSAS. A heme-binding site is contributed by cysteine 437.

Belongs to the cytochrome P450 family. As to expression, mainly expressed in leaves and, at low levels, in roots, fruits and stems.

The protein resides in the membrane. It participates in steroid metabolism; cholesterol metabolism. Functionally, involved in the biosynthesis of spiroketal steroid and saponin natural products from cholesterol such as diosgenin and analogs (e.g. furostanol and spirostanol), plant defense compounds used as main precursors for the industrial production of steroid hormones. During the 5,6-spiroketalization of cholesterol, may catalyze the 27-monohydroxylation of furostanol-type steroid to an intermediate product that undergoes a stereospecific formation of the terminal heterocycle to yield diosgenin. This is Cytochrome P450 CYP94D109 from Paris polyphylla (Daiswa polyphylla).